Consider the following 235-residue polypeptide: Putative N-acetylmannosamine-6-phosphate 2-epimerase (235 aa).

The protein belongs to the NanE family.

The catalysed reaction is an N-acyl-D-glucosamine 6-phosphate = an N-acyl-D-mannosamine 6-phosphate. It functions in the pathway amino-sugar metabolism; N-acetylneuraminate degradation; D-fructose 6-phosphate from N-acetylneuraminate: step 3/5. Functionally, converts N-acetylmannosamine-6-phosphate (ManNAc-6-P) to N-acetylglucosamine-6-phosphate (GlcNAc-6-P). This Photobacterium profundum (strain SS9) protein is Putative N-acetylmannosamine-6-phosphate 2-epimerase.